The primary structure comprises 147 residues: MEKYNREEFEEVIVDIGRVTKVVKGGRRFRFTALVIVGNRKGLVGVGYGKAKEVPDAIRKAVDDAFKNIVEVKTKGSTIAHDVEVKYNASRILLKPASEGTGVIAGGSTRPIVELAGIKDILTKSLGSNNSANVVRATIKALTMLKG.

The 64-residue stretch at 9 to 72 (FEEVIVDIGR…DDAFKNIVEV (64 aa)) folds into the S5 DRBM domain.

This sequence belongs to the universal ribosomal protein uS5 family. Part of the 30S ribosomal subunit. Contacts proteins S4 and S8.

Its function is as follows. With S4 and S12 plays an important role in translational accuracy. Functionally, located at the back of the 30S subunit body where it stabilizes the conformation of the head with respect to the body. The chain is Small ribosomal subunit protein uS5 from Campylobacter jejuni subsp. jejuni serotype O:6 (strain 81116 / NCTC 11828).